We begin with the raw amino-acid sequence, 581 residues long: Phosphoinositide phospholipase C 2 (581 aa).

Positions 26–102 (EIKTIFEKYS…NPPLALHKVH (77 aa)) constitute an EF-hand-like domain. In terms of domain architecture, PI-PLC X-box spans 103–248 (HDMDAPISHY…LKRRIIISTK (146 aa)). Catalysis depends on residues histidine 118 and histidine 164. Residues 279-314 (PSFIQRNKSEAKDDLDGNDDDDDDDDEDKSKINAPP) form a disordered region. A compositionally biased stretch (acidic residues) spans 294-305 (DGNDDDDDDDDE). Residues 317–433 (KHLIAIHAGK…GYIKKPDLLL (117 aa)) form the PI-PLC Y-box domain. One can recognise a C2 domain in the interval 434–563 (KSGSDSDIFD…EGIRAFPLHS (130 aa)).

Requires Ca(2+) as cofactor. In terms of processing, phosphorylation level varies significantly during early response to bacterial elicitor. In terms of tissue distribution, expressed in roots, shoots, leaves and flowers.

It localises to the cell membrane. The catalysed reaction is a 1,2-diacyl-sn-glycero-3-phospho-(1D-myo-inositol-4,5-bisphosphate) + H2O = 1D-myo-inositol 1,4,5-trisphosphate + a 1,2-diacyl-sn-glycerol + H(+). The production of the second messenger molecules diacylglycerol (DAG) and inositol 1,4,5-trisphosphate (IP3) is mediated by activated phosphatidylinositol-specific phospholipase C enzymes. At physiological calcium concentration, the preferred substrate is phosphatidylinositol 4,5-bisphosphate versus phosphatidylinositol. The protein is Phosphoinositide phospholipase C 2 (PLC2) of Arabidopsis thaliana (Mouse-ear cress).